The primary structure comprises 360 residues: Photosystem II protein D1 2 (360 aa).

The next 3 helical transmembrane spans lie at 29-46, 118-133, and 142-156; these read YIGW…AATT, HFLT…EWEL, and WICL…AATA. His118 provides a ligand contact to chlorophyll a. Tyr126 is a binding site for pheophytin a. 2 residues coordinate [CaMn4O5] cluster: Asp170 and Glu189. The chain crosses the membrane as a helical span at residues 197-218; that stretch reads FHMLGVAGVFGGSLFSAMHGSL. His198 lines the chlorophyll a pocket. Residues His215 and 264–265 each bind a quinone; that span reads SF. Residue His215 participates in Fe cation binding. His272 is a Fe cation binding site. Residues 274-288 form a helical membrane-spanning segment; the sequence is FLAAWPVIGIWFTAL. [CaMn4O5] cluster-binding residues include His332, Glu333, Asp342, and Ala344. The propeptide occupies 345-360; it reads AGEVAPVAISAPAING.

This sequence belongs to the reaction center PufL/M/PsbA/D family. PSII is composed of 1 copy each of membrane proteins PsbA, PsbB, PsbC, PsbD, PsbE, PsbF, PsbH, PsbI, PsbJ, PsbK, PsbL, PsbM, PsbT, PsbX, PsbY, PsbZ, Psb30/Ycf12, peripheral proteins PsbO, CyanoQ (PsbQ), PsbU, PsbV and a large number of cofactors. It forms dimeric complexes. Requires The D1/D2 heterodimer binds P680, chlorophylls that are the primary electron donor of PSII, and subsequent electron acceptors. It shares a non-heme iron and each subunit binds pheophytin, quinone, additional chlorophylls, carotenoids and lipids. D1 provides most of the ligands for the Mn4-Ca-O5 cluster of the oxygen-evolving complex (OEC). There is also a Cl(-1) ion associated with D1 and D2, which is required for oxygen evolution. The PSII complex binds additional chlorophylls, carotenoids and specific lipids. as cofactor. Tyr-161 forms a radical intermediate that is referred to as redox-active TyrZ, YZ or Y-Z. In terms of processing, C-terminally processed by CtpA; processing is essential to allow assembly of the oxygen-evolving complex and thus photosynthetic growth.

The protein resides in the cellular thylakoid membrane. It catalyses the reaction 2 a plastoquinone + 4 hnu + 2 H2O = 2 a plastoquinol + O2. Its function is as follows. Photosystem II (PSII) is a light-driven water:plastoquinone oxidoreductase that uses light energy to abstract electrons from H(2)O, generating O(2) and a proton gradient subsequently used for ATP formation. It consists of a core antenna complex that captures photons, and an electron transfer chain that converts photonic excitation into a charge separation. The D1/D2 (PsbA/PsbD) reaction center heterodimer binds P680, the primary electron donor of PSII as well as several subsequent electron acceptors. This Nostoc sp. (strain PCC 7120 / SAG 25.82 / UTEX 2576) protein is Photosystem II protein D1 2.